A 1196-amino-acid chain; its full sequence is DNA-directed RNA polymerase subunit beta (1196 aa).

The segment covering 1152–1165 (EEEIEMRDLEDEED) has biased composition (acidic residues). Residues 1152 to 1196 (EEEIEMRDLEDEEDAKQADGLALSGDEAPEETASPDVERDAVTKE) form a disordered region. Over residues 1187–1196 (DVERDAVTKE) the composition is skewed to basic and acidic residues.

Belongs to the RNA polymerase beta chain family. The RNAP catalytic core consists of 2 alpha, 1 beta, 1 beta' and 1 omega subunit. When a sigma factor is associated with the core the holoenzyme is formed, which can initiate transcription.

The enzyme catalyses RNA(n) + a ribonucleoside 5'-triphosphate = RNA(n+1) + diphosphate. In terms of biological role, DNA-dependent RNA polymerase catalyzes the transcription of DNA into RNA using the four ribonucleoside triphosphates as substrates. The polypeptide is DNA-directed RNA polymerase subunit beta (Bacillus velezensis (strain DSM 23117 / BGSC 10A6 / LMG 26770 / FZB42) (Bacillus amyloliquefaciens subsp. plantarum)).